Here is a 301-residue protein sequence, read N- to C-terminus: Methionyl-tRNA formyltransferase (301 aa).

110–113 (SLLP) is a binding site for (6S)-5,6,7,8-tetrahydrofolate.

This sequence belongs to the Fmt family.

It carries out the reaction L-methionyl-tRNA(fMet) + (6R)-10-formyltetrahydrofolate = N-formyl-L-methionyl-tRNA(fMet) + (6S)-5,6,7,8-tetrahydrofolate + H(+). Attaches a formyl group to the free amino group of methionyl-tRNA(fMet). The formyl group appears to play a dual role in the initiator identity of N-formylmethionyl-tRNA by promoting its recognition by IF2 and preventing the misappropriation of this tRNA by the elongation apparatus. The sequence is that of Methionyl-tRNA formyltransferase from Acidiphilium cryptum (strain JF-5).